A 315-amino-acid polypeptide reads, in one-letter code: Methionyl-tRNA formyltransferase (315 aa).

111-114 (SLLP) contributes to the (6S)-5,6,7,8-tetrahydrofolate binding site.

It belongs to the Fmt family.

The catalysed reaction is L-methionyl-tRNA(fMet) + (6R)-10-formyltetrahydrofolate = N-formyl-L-methionyl-tRNA(fMet) + (6S)-5,6,7,8-tetrahydrofolate + H(+). In terms of biological role, attaches a formyl group to the free amino group of methionyl-tRNA(fMet). The formyl group appears to play a dual role in the initiator identity of N-formylmethionyl-tRNA by promoting its recognition by IF2 and preventing the misappropriation of this tRNA by the elongation apparatus. The polypeptide is Methionyl-tRNA formyltransferase (Chlorobium phaeobacteroides (strain DSM 266 / SMG 266 / 2430)).